Reading from the N-terminus, the 375-residue chain is Protein HrmA (375 aa).

Its function is as follows. Unknown. May serve a regulatory function. This is Protein HrmA (hrmA) from Pseudomonas syringae pv. syringae.